The primary structure comprises 309 residues: Mitochondrial succinate-fumarate transporter 1 (309 aa).

Solcar repeat units lie at residues 11 to 96, 108 to 196, and 208 to 298; these read IPPY…FQTA, RGRF…FDIL, and LQPW…VTGL. The next 6 membrane-spanning stretches (helical) occupy residues 17–37, 65–85, 111–131, 171–191, 214–234, and 273–293; these read AVSG…IDVI, VRAL…KYTL, FLSG…PFEV, GAAP…TAKN, MISG…FDVV, and GLLP…AVAD.

The protein belongs to the mitochondrial carrier (TC 2.A.29) family. As to expression, expressed in root tips, cotyledons, hypocotyls, leaves, trichomes, stems, flowers, carpels, anthers, pollen and abscission zone of siliques.

Its subcellular location is the mitochondrion inner membrane. In terms of biological role, may transport cytoplasmic succinate, derived from fatty acid oxidation, into the mitochondrial matrix in exchange of fumarate during lipid mobilization in seed germination. Conversion of seed-reserved triacylglycerols into sucrose is necessary for growth before the onset of photosynthesis and involves fatty acid beta-oxidation, the glyoxylate cycle and gluconeogenesis. This Arabidopsis thaliana (Mouse-ear cress) protein is Mitochondrial succinate-fumarate transporter 1 (SFC1).